The primary structure comprises 218 residues: Large ribosomal subunit protein uL3 (218 aa).

The protein belongs to the universal ribosomal protein uL3 family. In terms of assembly, part of the 50S ribosomal subunit. Forms a cluster with proteins L14 and L19.

Its function is as follows. One of the primary rRNA binding proteins, it binds directly near the 3'-end of the 23S rRNA, where it nucleates assembly of the 50S subunit. In Corynebacterium jeikeium (strain K411), this protein is Large ribosomal subunit protein uL3.